The following is a 437-amino-acid chain: Adenosylhomocysteinase (437 aa).

Substrate-binding residues include Thr-54, Asp-130, and Glu-155. 156-158 (TTT) is a binding site for NAD(+). Positions 185 and 189 each coordinate substrate. NAD(+)-binding positions include Asn-190, 219 to 224 (GYGDVG), Glu-242, Asn-277, 298 to 300 (IGH), and Asn-345.

It belongs to the adenosylhomocysteinase family. As to quaternary structure, homotetramer. The cofactor is NAD(+).

Its subcellular location is the cytoplasm. The enzyme catalyses S-adenosyl-L-homocysteine + H2O = L-homocysteine + adenosine. It functions in the pathway amino-acid biosynthesis; L-homocysteine biosynthesis; L-homocysteine from S-adenosyl-L-homocysteine: step 1/1. Functionally, adenosylhomocysteine is a competitive inhibitor of S-adenosyl-L-methionine-dependent methyl transferase reactions; therefore adenosylhomocysteinase may play a key role in the control of methylations via regulation of the intracellular concentration of adenosylhomocysteine. This chain is Adenosylhomocysteinase, found in Leishmania donovani.